Here is a 677-residue protein sequence, read N- to C-terminus: Probable potassium transport system protein Kup (677 aa).

12 helical membrane-spanning segments follow: residues 13-33, 54-74, 98-118, 137-157, 171-191, 217-237, 249-269, 296-316, 345-365, 374-394, 402-422, and 429-449; these read GALI…LYTM, VSLV…IIAL, WLLL…TLTP, FIFP…LLIV, IFGP…LVNI, TGIF…ALYS, VSWI…GAWI, IFGV…LISG, MYIG…VWAF, AYGL…YQFI, ILAF…LIAS, and GGYA…IWFY.

It belongs to the HAK/KUP transporter (TC 2.A.72) family.

It is found in the cell membrane. The enzyme catalyses K(+)(in) + H(+)(in) = K(+)(out) + H(+)(out). Functionally, transport of potassium into the cell. Likely operates as a K(+):H(+) symporter. The chain is Probable potassium transport system protein Kup from Leuconostoc mesenteroides subsp. mesenteroides (strain ATCC 8293 / DSM 20343 / BCRC 11652 / CCM 1803 / JCM 6124 / NCDO 523 / NBRC 100496 / NCIMB 8023 / NCTC 12954 / NRRL B-1118 / 37Y).